The chain runs to 473 residues: Photosystem II CP43 reaction center protein (473 aa).

Positions 1–14 (MKTLYSLRRFYHVE) are excised as a propeptide. Thr15 carries the N-acetylthreonine modification. Thr15 carries the post-translational modification Phosphothreonine. A run of 5 helical transmembrane segments spans residues 69 to 93 (LFEV…PHLA), 134 to 155 (LIGP…KDKN), 178 to 200 (KAVW…RKIT), 255 to 275 (KPFA…LSYS), and 291 to 312 (WFNN…ASQA). Glu367 is a binding site for [CaMn4O5] cluster. The chain crosses the membrane as a helical span at residues 447–471 (RARAAAAGFEKGIDRETEPVFFMNP).

It belongs to the PsbB/PsbC family. PsbC subfamily. In terms of assembly, PSII is composed of 1 copy each of membrane proteins PsbA, PsbB, PsbC, PsbD, PsbE, PsbF, PsbH, PsbI, PsbJ, PsbK, PsbL, PsbM, PsbT, PsbX, PsbY, PsbZ, Psb30/Ycf12, at least 3 peripheral proteins of the oxygen-evolving complex and a large number of cofactors. It forms dimeric complexes. The cofactor is Binds multiple chlorophylls and provides some of the ligands for the Ca-4Mn-5O cluster of the oxygen-evolving complex. It may also provide a ligand for a Cl- that is required for oxygen evolution. PSII binds additional chlorophylls, carotenoids and specific lipids..

Its subcellular location is the plastid. The protein resides in the chloroplast thylakoid membrane. Its function is as follows. One of the components of the core complex of photosystem II (PSII). It binds chlorophyll and helps catalyze the primary light-induced photochemical processes of PSII. PSII is a light-driven water:plastoquinone oxidoreductase, using light energy to abstract electrons from H(2)O, generating O(2) and a proton gradient subsequently used for ATP formation. In Staurastrum punctulatum (Green alga), this protein is Photosystem II CP43 reaction center protein.